Reading from the N-terminus, the 506-residue chain is uncharacterized protein (506 aa).

This sequence to group II intron maturases.

Its subcellular location is the plastid. The protein localises to the chloroplast. This is an uncharacterized protein from Euglena gracilis.